The following is a 230-amino-acid chain: 3-dehydroquinate dehydratase (230 aa).

3-dehydroquinate contacts are provided by residues serine 26, 51-53 (EIR), and arginine 84. Histidine 127 serves as the catalytic Proton donor/acceptor. Lysine 150 serves as the catalytic Schiff-base intermediate with substrate. Arginine 190, threonine 209, and glutamine 213 together coordinate 3-dehydroquinate.

It belongs to the type-I 3-dehydroquinase family. In terms of assembly, homodimer.

The enzyme catalyses 3-dehydroquinate = 3-dehydroshikimate + H2O. It participates in metabolic intermediate biosynthesis; chorismate biosynthesis; chorismate from D-erythrose 4-phosphate and phosphoenolpyruvate: step 3/7. In terms of biological role, involved in the third step of the chorismate pathway, which leads to the biosynthesis of aromatic amino acids. Catalyzes the cis-dehydration of 3-dehydroquinate (DHQ) and introduces the first double bond of the aromatic ring to yield 3-dehydroshikimate. This chain is 3-dehydroquinate dehydratase, found in Thermoplasma volcanium (strain ATCC 51530 / DSM 4299 / JCM 9571 / NBRC 15438 / GSS1).